The sequence spans 480 residues: Glutamate--tRNA ligase (480 aa).

Positions 21 to 31 (PSPTGYLHVGG) match the 'HIGH' region motif. Zn(2+)-binding residues include Cys110, Cys112, Cys137, and His139. A 'KMSKS' region motif is present at residues 248–252 (KLSKR). Lys251 is a binding site for ATP.

It belongs to the class-I aminoacyl-tRNA synthetase family. Glutamate--tRNA ligase type 1 subfamily. Monomer. It depends on Zn(2+) as a cofactor.

The protein localises to the cytoplasm. It catalyses the reaction tRNA(Glu) + L-glutamate + ATP = L-glutamyl-tRNA(Glu) + AMP + diphosphate. Functionally, catalyzes the attachment of glutamate to tRNA(Glu) in a two-step reaction: glutamate is first activated by ATP to form Glu-AMP and then transferred to the acceptor end of tRNA(Glu). The chain is Glutamate--tRNA ligase from Haemophilus influenzae (strain ATCC 51907 / DSM 11121 / KW20 / Rd).